The primary structure comprises 393 residues: Digeranylgeranylglycerophospholipid reductase (393 aa).

The FAD site is built by Ala13, Asp32, Cys43, Ala44, Gly46, Arg95, Val119, Asp274, and Gly286. Residues Arg327 and Gly363 each contribute to the a 2,3-bis-O-(geranylgeranyl)-sn-glycerol 1-phospholipid site.

The protein belongs to the geranylgeranyl reductase family. DGGGPL reductase subfamily. Requires FAD as cofactor.

The catalysed reaction is a 2,3-bis-O-phytanyl-sn-glycerol 1-phospholipid + 8 A = a 2,3-bis-O-(geranylgeranyl)-sn-glycerol 1-phospholipid + 8 AH2. It catalyses the reaction 2,3-bis-O-(phytanyl)-sn-glycerol 1-phosphate + 8 A = 2,3-bis-O-(geranylgeranyl)-sn-glycerol 1-phosphate + 8 AH2. The enzyme catalyses CDP-2,3-bis-O-(geranylgeranyl)-sn-glycerol + 8 AH2 = CDP-2,3-bis-O-(phytanyl)-sn-glycerol + 8 A. It carries out the reaction archaetidylserine + 8 AH2 = 2,3-bis-O-phytanyl-sn-glycero-3-phospho-L-serine + 8 A. It participates in membrane lipid metabolism; glycerophospholipid metabolism. In terms of biological role, is involved in the reduction of 2,3-digeranylgeranylglycerophospholipids (unsaturated archaeols) into 2,3-diphytanylglycerophospholipids (saturated archaeols) in the biosynthesis of archaeal membrane lipids. Catalyzes the formation of archaetidic acid (2,3-di-O-phytanyl-sn-glyceryl phosphate) from 2,3-di-O-geranylgeranylglyceryl phosphate (DGGGP) via the hydrogenation of each double bond of the isoprenoid chains. Is also probably able to reduce double bonds of geranyl groups in CDP-2,3-bis-O-(geranylgeranyl)-sn-glycerol and archaetidylserine, thus acting at various stages in the biosynthesis of archaeal membrane lipids. The chain is Digeranylgeranylglycerophospholipid reductase from Pyrococcus horikoshii (strain ATCC 700860 / DSM 12428 / JCM 9974 / NBRC 100139 / OT-3).